We begin with the raw amino-acid sequence, 224 residues long: Ribose-5-phosphate isomerase A (224 aa).

Substrate-binding positions include 32-35, 85-88, and 98-101; these read TGST, DGAD, and KGGG. Glutamate 107 functions as the Proton acceptor in the catalytic mechanism. Substrate is bound at residue lysine 125.

This sequence belongs to the ribose 5-phosphate isomerase family. Homodimer.

It carries out the reaction aldehydo-D-ribose 5-phosphate = D-ribulose 5-phosphate. Its pathway is carbohydrate degradation; pentose phosphate pathway; D-ribose 5-phosphate from D-ribulose 5-phosphate (non-oxidative stage): step 1/1. Catalyzes the reversible conversion of ribose-5-phosphate to ribulose 5-phosphate. This Pseudomonas fluorescens (strain Pf0-1) protein is Ribose-5-phosphate isomerase A.